The sequence spans 509 residues: 2,3-bisphosphoglycerate-independent phosphoglycerate mutase (509 aa).

Residues Asp-13 and Ser-63 each coordinate Mn(2+). The active-site Phosphoserine intermediate is Ser-63. Residues His-124, 154–155 (RD), Arg-186, Arg-192, 261–264 (RPDR), and Lys-335 contribute to the substrate site. The Mn(2+) site is built by Asp-400, His-404, Asp-441, His-442, and His-459.

Belongs to the BPG-independent phosphoglycerate mutase family. As to quaternary structure, monomer. The cofactor is Mn(2+).

The catalysed reaction is (2R)-2-phosphoglycerate = (2R)-3-phosphoglycerate. The protein operates within carbohydrate degradation; glycolysis; pyruvate from D-glyceraldehyde 3-phosphate: step 3/5. Functionally, catalyzes the interconversion of 2-phosphoglycerate and 3-phosphoglycerate. This chain is 2,3-bisphosphoglycerate-independent phosphoglycerate mutase, found in Desulforudis audaxviator (strain MP104C).